Reading from the N-terminus, the 323-residue chain is Porphobilinogen deaminase (323 aa).

Residue Cys240 is modified to S-(dipyrrolylmethanemethyl)cysteine.

The protein belongs to the HMBS family. In terms of assembly, monomer. Requires dipyrromethane as cofactor.

It carries out the reaction 4 porphobilinogen + H2O = hydroxymethylbilane + 4 NH4(+). The protein operates within porphyrin-containing compound metabolism; protoporphyrin-IX biosynthesis; coproporphyrinogen-III from 5-aminolevulinate: step 2/4. Tetrapolymerization of the monopyrrole PBG into the hydroxymethylbilane pre-uroporphyrinogen in several discrete steps. This Sulfurovum sp. (strain NBC37-1) protein is Porphobilinogen deaminase.